The primary structure comprises 357 residues: Membrane-bound lytic murein transglycosylase C (357 aa).

An N-terminal signal peptide occupies residues 1–15 (MKKYLLLALLPFLYA). The N-palmitoyl cysteine moiety is linked to residue Cys-16. Cys-16 is lipidated: S-diacylglycerol cysteine.

This sequence belongs to the transglycosylase Slt family.

The protein resides in the cell outer membrane. It catalyses the reaction Exolytic cleavage of the (1-&gt;4)-beta-glycosidic linkage between N-acetylmuramic acid (MurNAc) and N-acetylglucosamine (GlcNAc) residues in peptidoglycan, from either the reducing or the non-reducing ends of the peptidoglycan chains, with concomitant formation of a 1,6-anhydrobond in the MurNAc residue.. Functionally, murein-degrading enzyme. May play a role in recycling of muropeptides during cell elongation and/or cell division. In Haemophilus influenzae (strain PittGG), this protein is Membrane-bound lytic murein transglycosylase C.